The following is an 853-amino-acid chain: DNA mismatch repair protein MutS (853 aa).

614–621 provides a ligand contact to ATP; it reads GPNMGGKS.

This sequence belongs to the DNA mismatch repair MutS family.

Its function is as follows. This protein is involved in the repair of mismatches in DNA. It is possible that it carries out the mismatch recognition step. This protein has a weak ATPase activity. This Escherichia coli O81 (strain ED1a) protein is DNA mismatch repair protein MutS.